The primary structure comprises 125 residues: Large ribosomal subunit protein bL12 (125 aa).

This sequence belongs to the bacterial ribosomal protein bL12 family. Homodimer. Part of the ribosomal stalk of the 50S ribosomal subunit. Forms a multimeric L10(L12)X complex, where L10 forms an elongated spine to which 2 to 4 L12 dimers bind in a sequential fashion. Binds GTP-bound translation factors.

In terms of biological role, forms part of the ribosomal stalk which helps the ribosome interact with GTP-bound translation factors. Is thus essential for accurate translation. This chain is Large ribosomal subunit protein bL12, found in Campylobacter concisus (strain 13826).